The primary structure comprises 356 residues: N-methyltransferase 4 (356 aa).

S-adenosyl-L-methionine is bound by residues 93-94 (QS), 128-136 (ILDIGCGFG), and 155-160 (TNSAEQ).

This sequence belongs to the CFA/CMAS family. As to expression, expressed in stems, roots, flower buds and leaves.

Probable N-methyltransferase not involved in benzylisoquinoline metabolism. Shows no detectable activity with (s)-coclaurine, (R)- or (S)-reticuline, papaverine or (R,S)-tetrahydropapaverine. The chain is N-methyltransferase 4 (NMT4) from Papaver somniferum (Opium poppy).